Reading from the N-terminus, the 430-residue chain is Glutamate-1-semialdehyde 2,1-aminomutase (430 aa).

Lys265 is subject to N6-(pyridoxal phosphate)lysine.

It belongs to the class-III pyridoxal-phosphate-dependent aminotransferase family. HemL subfamily. Homodimer. The cofactor is pyridoxal 5'-phosphate.

The protein resides in the cytoplasm. The enzyme catalyses (S)-4-amino-5-oxopentanoate = 5-aminolevulinate. It functions in the pathway porphyrin-containing compound metabolism; protoporphyrin-IX biosynthesis; 5-aminolevulinate from L-glutamyl-tRNA(Glu): step 2/2. The chain is Glutamate-1-semialdehyde 2,1-aminomutase from Shewanella oneidensis (strain ATCC 700550 / JCM 31522 / CIP 106686 / LMG 19005 / NCIMB 14063 / MR-1).